The primary structure comprises 293 residues: 4-diphosphocytidyl-2-C-methyl-D-erythritol kinase (293 aa).

K16 is a catalytic residue. 99–109 (PMGAGLGGGSS) is an ATP binding site. Residue D141 is part of the active site.

This sequence belongs to the GHMP kinase family. IspE subfamily.

The catalysed reaction is 4-CDP-2-C-methyl-D-erythritol + ATP = 4-CDP-2-C-methyl-D-erythritol 2-phosphate + ADP + H(+). It participates in isoprenoid biosynthesis; isopentenyl diphosphate biosynthesis via DXP pathway; isopentenyl diphosphate from 1-deoxy-D-xylulose 5-phosphate: step 3/6. In terms of biological role, catalyzes the phosphorylation of the position 2 hydroxy group of 4-diphosphocytidyl-2C-methyl-D-erythritol. The protein is 4-diphosphocytidyl-2-C-methyl-D-erythritol kinase of Burkholderia cenocepacia (strain ATCC BAA-245 / DSM 16553 / LMG 16656 / NCTC 13227 / J2315 / CF5610) (Burkholderia cepacia (strain J2315)).